Consider the following 600-residue polypeptide: Glutamine--fructose-6-phosphate aminotransferase [isomerizing] (600 aa).

The active-site Nucleophile; for GATase activity is C2. Residues 2-217 (CGIVGYIGTE…DEEIVIVTKD (216 aa)) enclose the Glutamine amidotransferase type-2 domain. SIS domains follow at residues 283-422 (IRQA…AKGI) and 452-590 (IARD…VDKP). K595 (for Fru-6P isomerization activity) is an active-site residue.

In terms of assembly, homodimer.

The protein localises to the cytoplasm. It catalyses the reaction D-fructose 6-phosphate + L-glutamine = D-glucosamine 6-phosphate + L-glutamate. Its function is as follows. Catalyzes the first step in hexosamine metabolism, converting fructose-6P into glucosamine-6P using glutamine as a nitrogen source. In Halalkalibacterium halodurans (strain ATCC BAA-125 / DSM 18197 / FERM 7344 / JCM 9153 / C-125) (Bacillus halodurans), this protein is Glutamine--fructose-6-phosphate aminotransferase [isomerizing].